The chain runs to 620 residues: 1-deoxy-D-xylulose-5-phosphate synthase (620 aa).

Residues histidine 75 and 116 to 118 each bind thiamine diphosphate; that span reads AHS. Aspartate 147 contributes to the Mg(2+) binding site. Residues 148–149, asparagine 177, tyrosine 284, and glutamate 366 contribute to the thiamine diphosphate site; that span reads GA. Residue asparagine 177 participates in Mg(2+) binding.

Belongs to the transketolase family. DXPS subfamily. Homodimer. Mg(2+) serves as cofactor. The cofactor is thiamine diphosphate.

The catalysed reaction is D-glyceraldehyde 3-phosphate + pyruvate + H(+) = 1-deoxy-D-xylulose 5-phosphate + CO2. It participates in metabolic intermediate biosynthesis; 1-deoxy-D-xylulose 5-phosphate biosynthesis; 1-deoxy-D-xylulose 5-phosphate from D-glyceraldehyde 3-phosphate and pyruvate: step 1/1. Its function is as follows. Catalyzes the acyloin condensation reaction between C atoms 2 and 3 of pyruvate and glyceraldehyde 3-phosphate to yield 1-deoxy-D-xylulose-5-phosphate (DXP). This is 1-deoxy-D-xylulose-5-phosphate synthase from Bordetella bronchiseptica (strain ATCC BAA-588 / NCTC 13252 / RB50) (Alcaligenes bronchisepticus).